A 581-amino-acid chain; its full sequence is Chaperonin GroEL 1 (581 aa).

Residues 29-32 (TIGP), 86-90 (DGTTT), Gly413, and Asp492 contribute to the ATP site. The disordered stretch occupies residues 522–543 (PEPEPAAPGGPSGDPMGGMGGM). Residues 531 to 543 (GPSGDPMGGMGGM) are compositionally biased toward gly residues.

Belongs to the chaperonin (HSP60) family. In terms of assembly, forms a cylinder of 14 subunits composed of two heptameric rings stacked back-to-back. Interacts with the co-chaperonin GroES.

The protein localises to the cytoplasm. It catalyses the reaction ATP + H2O + a folded polypeptide = ADP + phosphate + an unfolded polypeptide.. Its function is as follows. Together with its co-chaperonin GroES, plays an essential role in assisting protein folding. The GroEL-GroES system forms a nano-cage that allows encapsulation of the non-native substrate proteins and provides a physical environment optimized to promote and accelerate protein folding. The protein is Chaperonin GroEL 1 of Prochlorococcus marinus (strain MIT 9215).